The chain runs to 275 residues: Nitrogenase iron protein 3 (275 aa).

9 to 16 (GKGGIGKS) contacts ATP. Cys97 is a binding site for [4Fe-4S] cluster. Arg100 is subject to ADP-ribosylarginine; by dinitrogenase reductase ADP-ribosyltransferase. Cys132 is a binding site for [4Fe-4S] cluster.

The protein belongs to the NifH/BchL/ChlL family. In terms of assembly, homodimer. [4Fe-4S] cluster is required as a cofactor. The reversible ADP-ribosylation of Arg-100 inactivates the nitrogenase reductase and regulates nitrogenase activity.

It catalyses the reaction N2 + 8 reduced [2Fe-2S]-[ferredoxin] + 16 ATP + 16 H2O = H2 + 8 oxidized [2Fe-2S]-[ferredoxin] + 2 NH4(+) + 16 ADP + 16 phosphate + 6 H(+). The key enzymatic reactions in nitrogen fixation are catalyzed by the nitrogenase complex, which has 2 components: the iron protein and the molybdenum-iron protein. The polypeptide is Nitrogenase iron protein 3 (nifH3) (Clostridium pasteurianum).